We begin with the raw amino-acid sequence, 99 residues long: NADH-quinone oxidoreductase subunit K (99 aa).

A run of 3 helical transmembrane segments spans residues 3–23, 28–48, and 59–79; these read PDNY…GVLL, IVMF…FVTF, and VVAF…LAII.

The protein belongs to the complex I subunit 4L family. NDH-1 is composed of 14 different subunits. Subunits NuoA, H, J, K, L, M, N constitute the membrane sector of the complex.

The protein resides in the cell membrane. It carries out the reaction a quinone + NADH + 5 H(+)(in) = a quinol + NAD(+) + 4 H(+)(out). NDH-1 shuttles electrons from NADH, via FMN and iron-sulfur (Fe-S) centers, to quinones in the respiratory chain. The immediate electron acceptor for the enzyme in this species is believed to be a menaquinone. Couples the redox reaction to proton translocation (for every two electrons transferred, four hydrogen ions are translocated across the cytoplasmic membrane), and thus conserves the redox energy in a proton gradient. This Mycolicibacterium gilvum (strain PYR-GCK) (Mycobacterium gilvum (strain PYR-GCK)) protein is NADH-quinone oxidoreductase subunit K.